The chain runs to 326 residues: Protease HtpX homolog (326 aa).

2 helical membrane passes run 10–30 and 41–61; these read LNMA…ALAV and VGLM…QWLF. His147 contacts Zn(2+). The active site involves Glu148. His151 serves as a coordination point for Zn(2+). The next 2 membrane-spanning stretches (helical) occupy residues 159–179 and 197–217; these read LLMA…WIFW and LLFL…LLVL. Glu224 is a Zn(2+) binding site.

Belongs to the peptidase M48B family. Zn(2+) serves as cofactor.

The protein localises to the cell membrane. The chain is Protease HtpX homolog from Saccharolobus islandicus (strain Y.N.15.51 / Yellowstone #2) (Sulfolobus islandicus).